The following is an 83-amino-acid chain: Short neurotoxin 3FTx-Oxy4 (83 aa).

An N-terminal signal peptide occupies residues 1-21 (MKTLLLTLVVVTIVCLDLGYT). Intrachain disulfides connect cysteine 24-cysteine 45, cysteine 38-cysteine 62, cysteine 64-cysteine 75, and cysteine 76-cysteine 81.

The protein belongs to the three-finger toxin family. Short-chain subfamily. Type I alpha-neurotoxin sub-subfamily. Expressed by the venom gland.

The protein resides in the secreted. Its function is as follows. Binds to muscle nicotinic acetylcholine receptor (nAChR) and inhibit acetylcholine from binding to the receptor, thereby impairing neuromuscular transmission. The protein is Short neurotoxin 3FTx-Oxy4 of Oxyuranus microlepidotus (Inland taipan).